A 68-amino-acid polypeptide reads, in one-letter code: Large ribosomal subunit protein uL29 (68 aa).

This sequence belongs to the universal ribosomal protein uL29 family.

This is Large ribosomal subunit protein uL29 from Chlorobaculum parvum (strain DSM 263 / NCIMB 8327) (Chlorobium vibrioforme subsp. thiosulfatophilum).